The sequence spans 471 residues: Glutamate--tRNA ligase 1 (471 aa).

Positions 10–20 (PSPTGFLHIGG) match the 'HIGH' region motif. Residues 113-140 (ARKEGRPPRYDGRWRDRDPSEAPKDRDP) are disordered. Positions 239 to 243 (KLSKR) match the 'KMSKS' region motif. Position 242 (Lys-242) interacts with ATP.

The protein belongs to the class-I aminoacyl-tRNA synthetase family. Glutamate--tRNA ligase type 1 subfamily. Monomer.

The protein resides in the cytoplasm. It carries out the reaction tRNA(Glu) + L-glutamate + ATP = L-glutamyl-tRNA(Glu) + AMP + diphosphate. Its function is as follows. Catalyzes the attachment of glutamate to tRNA(Glu) in a two-step reaction: glutamate is first activated by ATP to form Glu-AMP and then transferred to the acceptor end of tRNA(Glu). This chain is Glutamate--tRNA ligase 1, found in Xanthobacter autotrophicus (strain ATCC BAA-1158 / Py2).